The primary structure comprises 68 residues: Putative membrane protein insertion efficiency factor (68 aa).

It belongs to the UPF0161 family.

The protein localises to the cell membrane. Its function is as follows. Could be involved in insertion of integral membrane proteins into the membrane. This Syntrophomonas wolfei subsp. wolfei (strain DSM 2245B / Goettingen) protein is Putative membrane protein insertion efficiency factor.